The chain runs to 326 residues: Aquaporin-4 (326 aa).

Over 1-39 (MSDGAGAAARRWGKCGGRSCSRESIMVAFKGVWTQAFWK) the chain is Cytoplasmic. 2 S-palmitoyl cysteine lipidation sites follow: C15 and C20. The chain crosses the membrane as a helical span at residues 40–60 (AVTAEFLAMLIFVLLSVGSTI). Topologically, residues 61-72 (NWGGSENPLPVD) are extracellular. Residues 73–92 (MVLISLCFGLSIATMVQCFG) traverse the membrane as a helical segment. Residues 93-96 (HISG) are Cytoplasmic-facing. The discontinuously helical intramembrane region spans 97–104 (GHINPAVT). The NPA 1 signature appears at 100 to 102 (NPA). Residues 105-118 (VAMVCTRKISIAKS) are Cytoplasmic-facing. S114 bears the Phosphoserine; by PKG mark. The helical transmembrane segment at 119 to 139 (VFYITAQCLGAIIGAGILYLV) threads the bilayer. Residues 140 to 158 (TPPNVVGGLGVTTVHGNLT) are Extracellular-facing. N-linked (GlcNAc...) asparagine glycosylation is present at N156. A helical membrane pass occupies residues 159–179 (AGHGLLVELIITFQLVFTIFA). Topologically, residues 180-187 (SCDSKRTD) are cytoplasmic. S183 is subject to Phosphoserine; by PKC. A helical transmembrane segment spans residues 188-208 (VTGSIALAIGFSVAIGHLFAI). The N-linked (GlcNAc...) asparagine glycan is linked to N209. At 209–211 (NYT) the chain is on the extracellular side. The discontinuously helical intramembrane region spans 212-225 (GASMNPARSFGPAV). The short motif at 216 to 218 (NPA) is the NPA 2 element. Residues 226-234 (IMGNWENHW) are Extracellular-facing. A helical transmembrane segment spans residues 235-255 (IYWVGPIIGAVLAGALYEYVF). Residues 256–326 (CPDVELKRRL…DSAGEVLSSV (71 aa)) are Cytoplasmic-facing. Phosphoserine is present on residues S279 and S288. T292 bears the Phosphothreonine mark. The residue at position 324 (S324) is a Phosphoserine.

This sequence belongs to the MIP/aquaporin (TC 1.A.8) family. As to quaternary structure, homotetramer. The tetramers can form oligomeric arrays in membranes. The size of the oligomers differs between tissues and is smaller in skeletal muscle than in brain. Interaction between AQP4 oligomeric arrays in close-by cells can contribute to cell-cell adhesion. Part of a complex containing MLC1, TRPV4, HEPACAM and ATP1B1. Post-translationally, phosphorylation by PKC at Ser-183 reduces conductance by 50%. Phosphorylation by PKG at Ser-114 in response to glutamate increases conductance by 40%. In terms of processing, isoform Long: Palmitoylated on its N-terminal region.

Its subcellular location is the cell membrane. It localises to the basolateral cell membrane. The protein resides in the endosome membrane. It is found in the sarcolemma. The protein localises to the cell projection. The catalysed reaction is H2O(in) = H2O(out). Functionally, forms a water-specific channel. Plays an important role in brain water homeostasis and in glymphatic solute transport. Required for a normal rate of water exchange across the blood brain interface. Required for normal levels of cerebrospinal fluid influx into the brain cortex and parenchyma along paravascular spaces that surround penetrating arteries, and for normal drainage of interstitial fluid along paravenous drainage pathways. Thereby, it is required for normal clearance of solutes from the brain interstitial fluid, including soluble beta-amyloid peptides derived from APP. Plays a redundant role in urinary water homeostasis and urinary concentrating ability. This Notomys alexis (Spinifex hopping mouse) protein is Aquaporin-4 (AQP4).